Consider the following 224-residue polypeptide: Small ribosomal subunit protein uS3 (224 aa).

Positions 39-107 (IREFLKKKPS…DVWVEIAEVK (69 aa)) constitute a KH type-2 domain.

The protein belongs to the universal ribosomal protein uS3 family. Part of the 30S ribosomal subunit. Forms a tight complex with proteins S10 and S14.

Its function is as follows. Binds the lower part of the 30S subunit head. Binds mRNA in the 70S ribosome, positioning it for translation. The protein is Small ribosomal subunit protein uS3 of Chlamydia muridarum (strain MoPn / Nigg).